Consider the following 136-residue polypeptide: uncharacterized protein (136 aa).

2 disordered regions span residues threonine 58–threonine 82 and asparagine 112–glutamine 136.

This is an uncharacterized protein from Dictyostelium discoideum (Social amoeba).